The chain runs to 501 residues: MEELRGYLEIDRPHQQRFLYPLLFQESIYALAHNHGLNGSILYEPMEDLGHDKKSSSLNVKRLIIQMYQQNHFIISFNDSNQNRFLGHSRNSYFQMVSEGFAVIVEIPFSMRLVSSLEKGSESHNFQSIHSIFPFLEDKLSYLNYVLDILIPHPIHLEILVQSLRQWIRDLPSLHLLRFFLHEHQNWNSFITTNTKKCSSFFSRENQRLFLFLYNFHVYQFESLFVFLRKQFFHLRSISFGSFLERTHFYGKIENFVVSMRNHSQNILWLFKDLFMHYVRYKGKSIMASRGTYLLMNKWKSHLVNFWQFRFYFWSQPGRIHINELSNHSFYFPGYLSGLRLNPSMVRSEMLENSFMIDAVIKRFDTVVPTIFLIGSLAKVKLCNVSGHPISKSVWADSSDSDILDQFGRICRNLSHYHSGSYKKHSLCRIKYILRLSCARTLARKHKSTVRAILKRLGSEFLDEFLTEEQEILSLIFPKTPFHSGRIWYLDIIRIHSLANH.

It belongs to the intron maturase 2 family. MatK subfamily.

The protein localises to the plastid. The protein resides in the chloroplast. Its function is as follows. Usually encoded in the trnK tRNA gene intron. Probably assists in splicing its own and other chloroplast group II introns. The polypeptide is Maturase K (Amborella trichopoda).